The primary structure comprises 263 residues: S-methyl-5'-thioadenosine phosphorylase (263 aa).

Residues Thr-13, 55–56 (RH), and 88–89 (SA) contribute to the phosphate site. Met-186 is a binding site for substrate. Thr-187 contacts phosphate. 210 to 212 (DYD) provides a ligand contact to substrate.

Belongs to the PNP/MTAP phosphorylase family. MTAP subfamily. In terms of assembly, homohexamer. Dimer of a homotrimer.

It carries out the reaction S-methyl-5'-thioadenosine + phosphate = 5-(methylsulfanyl)-alpha-D-ribose 1-phosphate + adenine. The protein operates within amino-acid biosynthesis; L-methionine biosynthesis via salvage pathway; S-methyl-5-thio-alpha-D-ribose 1-phosphate from S-methyl-5'-thioadenosine (phosphorylase route): step 1/1. Functionally, catalyzes the reversible phosphorylation of S-methyl-5'-thioadenosine (MTA) to adenine and 5-methylthioribose-1-phosphate. Involved in the breakdown of MTA, a major by-product of polyamine biosynthesis. Responsible for the first step in the methionine salvage pathway after MTA has been generated from S-adenosylmethionine. Has broad substrate specificity with 6-aminopurine nucleosides as preferred substrates. The sequence is that of S-methyl-5'-thioadenosine phosphorylase from Nitrosopumilus maritimus (strain SCM1).